Consider the following 215-residue polypeptide: uncharacterized protein (215 aa).

6 helical membrane-spanning segments follow: residues 3–23 (LLAYIPTNVLATYLTLVLRSI), 30–50 (ANLLAIPNFVLHILLLFGLTW), 59–79 (LGLSLLQPLYTVPLLAVLRFW), 87–107 (WGTYAIITLILDNPYIHAICV), 122–142 (VSTCLYNMFVQAGLIISSNIY), and 156–176 (VLFGLALFMFPILIGSKLIYV).

Belongs to the major facilitator superfamily. Allantoate permease family.

It is found in the membrane. This is an uncharacterized protein from Saccharomyces cerevisiae (strain ATCC 204508 / S288c) (Baker's yeast).